A 116-amino-acid polypeptide reads, in one-letter code: Large ribosomal subunit protein bL20c (116 aa).

Belongs to the bacterial ribosomal protein bL20 family.

The protein localises to the plastid. It localises to the chloroplast. Functionally, binds directly to 23S ribosomal RNA and is necessary for the in vitro assembly process of the 50S ribosomal subunit. It is not involved in the protein synthesizing functions of that subunit. In Cyanidioschyzon merolae (strain NIES-3377 / 10D) (Unicellular red alga), this protein is Large ribosomal subunit protein bL20c.